Consider the following 417-residue polypeptide: Serine hydroxymethyltransferase (417 aa).

(6S)-5,6,7,8-tetrahydrofolate contacts are provided by residues Leu-122 and 126-128; that span reads GHL. N6-(pyridoxal phosphate)lysine is present on Lys-230. A (6S)-5,6,7,8-tetrahydrofolate-binding site is contributed by 355 to 357; the sequence is SPF.

This sequence belongs to the SHMT family. In terms of assembly, homodimer. Requires pyridoxal 5'-phosphate as cofactor.

The protein resides in the cytoplasm. The catalysed reaction is (6R)-5,10-methylene-5,6,7,8-tetrahydrofolate + glycine + H2O = (6S)-5,6,7,8-tetrahydrofolate + L-serine. It functions in the pathway one-carbon metabolism; tetrahydrofolate interconversion. Its pathway is amino-acid biosynthesis; glycine biosynthesis; glycine from L-serine: step 1/1. Catalyzes the reversible interconversion of serine and glycine with tetrahydrofolate (THF) serving as the one-carbon carrier. This reaction serves as the major source of one-carbon groups required for the biosynthesis of purines, thymidylate, methionine, and other important biomolecules. Also exhibits THF-independent aldolase activity toward beta-hydroxyamino acids, producing glycine and aldehydes, via a retro-aldol mechanism. The polypeptide is Serine hydroxymethyltransferase (Francisella tularensis subsp. holarctica (strain LVS)).